Here is a 153-residue protein sequence, read N- to C-terminus: Nucleoside diphosphate kinase (153 aa).

The ATP site is built by Lys-9, Phe-57, Arg-85, Thr-91, Arg-102, and Asn-112. The Pros-phosphohistidine intermediate role is filled by His-115.

It belongs to the NDK family. As to quaternary structure, homotetramer. Mg(2+) is required as a cofactor.

The protein localises to the cytoplasm. It carries out the reaction a 2'-deoxyribonucleoside 5'-diphosphate + ATP = a 2'-deoxyribonucleoside 5'-triphosphate + ADP. The enzyme catalyses a ribonucleoside 5'-diphosphate + ATP = a ribonucleoside 5'-triphosphate + ADP. In terms of biological role, major role in the synthesis of nucleoside triphosphates other than ATP. The ATP gamma phosphate is transferred to the NDP beta phosphate via a ping-pong mechanism, using a phosphorylated active-site intermediate. The sequence is that of Nucleoside diphosphate kinase from Parabacteroides distasonis (strain ATCC 8503 / DSM 20701 / CIP 104284 / JCM 5825 / NCTC 11152).